The primary structure comprises 225 residues: Heptaprenylglyceryl phosphate synthase (225 aa).

Lys-6 is a sn-glycerol 1-phosphate binding site. Mg(2+)-binding residues include Asp-8 and Thr-34. Sn-glycerol 1-phosphate contacts are provided by residues 153 to 158, Gly-183, and 203 to 204; these read YVEYSG and GN.

Belongs to the GGGP/HepGP synthase family. Group I subfamily. As to quaternary structure, homodimer. Mg(2+) serves as cofactor.

The catalysed reaction is sn-glycerol 1-phosphate + all-trans-heptaprenyl diphosphate = 3-heptaprenyl-sn-glycero-1-phosphate + diphosphate. Its pathway is membrane lipid metabolism; glycerophospholipid metabolism. Prenyltransferase that catalyzes in vivo the transfer of the heptaprenyl moiety of heptaprenyl pyrophosphate (HepPP; 35 carbon atoms) to the C3 hydroxyl of sn-glycerol-1-phosphate (G1P), producing heptaprenylglyceryl phosphate (HepGP). This reaction is an ether-bond-formation step in the biosynthesis of archaea-type G1P-based membrane lipids found in Bacillales. This Listeria innocua serovar 6a (strain ATCC BAA-680 / CLIP 11262) protein is Heptaprenylglyceryl phosphate synthase.